The chain runs to 137 residues: UPF0275 protein PM0489 (137 aa).

It belongs to the UPF0275 family.

This chain is UPF0275 protein PM0489, found in Pasteurella multocida (strain Pm70).